Consider the following 413-residue polypeptide: Tryptophan synthase beta chain (413 aa).

At lysine 106 the chain carries N6-(pyridoxal phosphate)lysine.

Belongs to the TrpB family. Tetramer of two alpha and two beta chains. The cofactor is pyridoxal 5'-phosphate.

It carries out the reaction (1S,2R)-1-C-(indol-3-yl)glycerol 3-phosphate + L-serine = D-glyceraldehyde 3-phosphate + L-tryptophan + H2O. It functions in the pathway amino-acid biosynthesis; L-tryptophan biosynthesis; L-tryptophan from chorismate: step 5/5. The beta subunit is responsible for the synthesis of L-tryptophan from indole and L-serine. The protein is Tryptophan synthase beta chain of Methylobacterium radiotolerans (strain ATCC 27329 / DSM 1819 / JCM 2831 / NBRC 15690 / NCIMB 10815 / 0-1).